Consider the following 58-residue polypeptide: U11-ctenitoxin-Pn1b (58 aa).

Disulfide bonds link Cys2–Cys16, Cys9–Cys22, Cys15–Cys40, Cys24–Cys38, and Cys48–Cys55.

Expressed by the venom gland.

It is found in the secreted. Non-toxic to mice. The protein is U11-ctenitoxin-Pn1b of Phoneutria nigriventer (Brazilian armed spider).